Here is a 312-residue protein sequence, read N- to C-terminus: Very-long-chain 3-oxoacyl-CoA reductase (312 aa).

Residues 4–24 (ALPAAGFLYWVGASTVAYLAL) form a helical membrane-spanning segment. Residue 50–79 (GEWAVVTGGTDGIGKSYAEELAKRGMKIVL) participates in NADP(+) binding. 2 helical membrane passes run 182–202 (GAILNISSASGMYPVPLLTIY) and 271–291 (GYPIHSLVASVSASLPSWLYF). Position 189 (Ser-189) interacts with substrate. The active-site Proton acceptor is the Tyr-202. The Di-lysine motif motif lies at 308-312 (KMKMN).

This sequence belongs to the short-chain dehydrogenases/reductases (SDR) family. 17-beta-HSD 3 subfamily.

Its subcellular location is the endoplasmic reticulum membrane. The catalysed reaction is a very-long-chain (3R)-3-hydroxyacyl-CoA + NADP(+) = a very-long-chain 3-oxoacyl-CoA + NADPH + H(+). It catalyses the reaction 17beta-estradiol + NAD(+) = estrone + NADH + H(+). The enzyme catalyses 17beta-estradiol + NADP(+) = estrone + NADPH + H(+). It carries out the reaction 3-oxooctadecanoyl-CoA + NADPH + H(+) = (3R)-hydroxyoctadecanoyl-CoA + NADP(+). The catalysed reaction is (7Z,10Z,13Z,16Z)-3-oxodocosatetraenoyl-CoA + NADPH + H(+) = (3R)-hydroxy-(7Z,10Z,13Z,16Z)-docosatetraenoyl-CoA + NADP(+). It catalyses the reaction 3-oxo-(7Z,10Z,13Z,16Z,19Z)-docosapentaenoyl-CoA + NADPH + H(+) = (3R)-hydroxy-(7Z,10Z,13Z,16Z,19Z)-docosapentaenoyl-CoA + NADP(+). The enzyme catalyses (8Z,11Z,14Z)-3-oxoeicosatrienoyl-CoA + NADPH + H(+) = (3R)-hydroxy-(8Z,11Z,14Z)-eicosatrienoyl-CoA + NADP(+). The protein operates within lipid metabolism; fatty acid biosynthesis. It participates in steroid biosynthesis; estrogen biosynthesis. In terms of biological role, catalyzes the second of the four reactions of the long-chain fatty acids elongation cycle. This endoplasmic reticulum-bound enzymatic process, allows the addition of two carbons to the chain of long- and very long-chain fatty acids/VLCFAs per cycle. This enzyme has a 3-ketoacyl-CoA reductase activity, reducing 3-ketoacyl-CoA to 3-hydroxyacyl-CoA, within each cycle of fatty acid elongation. Thereby, it may participate in the production of VLCFAs of different chain lengths that are involved in multiple biological processes as precursors of membrane lipids and lipid mediators. May also catalyze the transformation of estrone (E1) into estradiol (E2) and play a role in estrogen formation. In Bos taurus (Bovine), this protein is Very-long-chain 3-oxoacyl-CoA reductase (HSD17B12).